The following is a 469-amino-acid chain: Trigger factor (469 aa).

Positions 162-243 constitute a PPIase FKBP-type domain; the sequence is GDFVSIDLSA…VKSVKERELP (82 aa). The disordered stretch occupies residues 438 to 469; the sequence is GPSGEQAAEDSAEESTDAAEGEAAEDADDTDK. The segment covering 444–469 has biased composition (acidic residues); it reads AAEDSAEESTDAAEGEAAEDADDTDK.

This sequence belongs to the FKBP-type PPIase family. Tig subfamily.

The protein localises to the cytoplasm. It catalyses the reaction [protein]-peptidylproline (omega=180) = [protein]-peptidylproline (omega=0). Its function is as follows. Involved in protein export. Acts as a chaperone by maintaining the newly synthesized protein in an open conformation. Functions as a peptidyl-prolyl cis-trans isomerase. The sequence is that of Trigger factor from Mycolicibacterium smegmatis (strain ATCC 700084 / mc(2)155) (Mycobacterium smegmatis).